The primary structure comprises 123 residues: Small ribosomal subunit protein uS12 (123 aa).

A disordered region spans residues M1–L24. The span at K10 to K20 shows a compositional bias: basic residues. D89 is modified (3-methylthioaspartic acid).

The protein belongs to the universal ribosomal protein uS12 family. Part of the 30S ribosomal subunit. Contacts proteins S8 and S17. May interact with IF1 in the 30S initiation complex.

Functionally, with S4 and S5 plays an important role in translational accuracy. Interacts with and stabilizes bases of the 16S rRNA that are involved in tRNA selection in the A site and with the mRNA backbone. Located at the interface of the 30S and 50S subunits, it traverses the body of the 30S subunit contacting proteins on the other side and probably holding the rRNA structure together. The combined cluster of proteins S8, S12 and S17 appears to hold together the shoulder and platform of the 30S subunit. The polypeptide is Small ribosomal subunit protein uS12 (Sulfurovum sp. (strain NBC37-1)).